The sequence spans 347 residues: Calcium homeostasis modulator protein 3 (347 aa).

Residues 1 to 20 (MDRFRMLFQHLQSSSESVMN) are Cytoplasmic-facing. Residues 9–36 (QHLQSSSESVMNGICLLLAAVTVKIYSS) form a central pore region. Residues 21–36 (GICLLLAAVTVKIYSS) traverse the membrane as a helical segment. Residues 37 to 48 (LDFNCPCLERYN) are Extracellular-facing. 2 disulfide bridges follow: C41-C126 and C43-C157. Residues 49–71 (ALYGLGLLLTPPLALFLCGLLVN) form a helical membrane-spanning segment. The Cytoplasmic portion of the chain corresponds to 72–98 (RQSVLMVEEWRRPAGHRRKDLGIIRYM). The S-palmitoyl cysteine moiety is linked to residue C99. Residues 99–124 (CSSVLQRALAAPLVWILLALLDGKCF) traverse the membrane as a helical segment. Over 125 to 176 (VCAFSNSVDPEKFLDFANMTPRQVQLFLAKVPCKEDELVKNSPARKAVSRYL) the chain is Extracellular. N142 carries an N-linked (GlcNAc...) asparagine glycan. The chain crosses the membrane as a helical span at residues 177-202 (RCLSQAIGWSITLLVIVVAFLARCLR). Residues C200 and C204 are each lipidated (S-palmitoyl cysteine). Topologically, residues 203–347 (PCFDQTVFLQ…GTKLCHQLNV (145 aa)) are cytoplasmic. The tract at residues 265–290 (GGIPESQESSEPPELREDRDSGNGKA) is disordered. The segment covering 277–286 (PELREDRDSG) has biased composition (basic and acidic residues).

The protein belongs to the CALHM family. In terms of assembly, associates with CALHM1 as a pore-forming subunit in a hetero-hexameric channel complex. In terms of processing, N-glycosylated. Palmitoylated by ZDHHC3 and ZDHHC15. Palmitoylation positively regulates CALHM1:CALHM3 channel conductance. Expressed in taste bud cells.

The protein localises to the basolateral cell membrane. It catalyses the reaction ATP(in) = ATP(out). The catalysed reaction is Ca(2+)(in) = Ca(2+)(out). It carries out the reaction Na(+)(in) = Na(+)(out). The enzyme catalyses K(+)(in) = K(+)(out). It catalyses the reaction chloride(in) = chloride(out). Functionally, pore-forming subunit of gustatory voltage-gated ion channels required for sensory perception of sweet, bitter and umami tastes. With CALHM1 forms a fast-activating voltage-gated ATP-release channel in type II taste bud cells, ATP acting as a neurotransmitter to activate afferent neural gustatory pathways. Acts both as a voltage-gated and calcium-activated ion channel: mediates neuronal excitability in response to membrane depolarization and low extracellular Ca(2+) concentration. Has poor ion selectivity and forms a wide pore (around 14 Angstroms) that mediates permeation of small ions including Ca(2+), Na(+), K(+) and Cl(-), as well as larger ions such as ATP(4-). The protein is Calcium homeostasis modulator protein 3 of Mus musculus (Mouse).